The chain runs to 244 residues: MFLVPLLAALSLSAPKVAAHGGVLAYSLAGTWYNGFVPYNTPTGQSTIQREWDTYNPITDPTDASISCNINGASLGSAQKSATVAAGSSVTAYWNQWPHTIGPVMVYMANCGGDCTTATTSSLEWFKINQVGLVSGTLTSGTWGMGQLVANNNSWTTSIPSSLAAGNYILRHELLAIHTSNQPQFYPECAQLIVTGGEGATPPASYLVKLPGAYSMSDPGVNIDIYSHETETNYTIPGPAVWQG.

Residues 1-19 (MFLVPLLAALSLSAPKVAA) form the signal peptide. Residue H20 participates in Cu(2+) binding. Residue Y39 participates in (1,4-beta-D-glucosyl)n binding. Cystine bridges form between C68–C189 and C111–C115. H99 is a binding site for Cu(2+). N-linked (GlcNAc...) asparagine glycosylation occurs at N152. H178 and Q184 together coordinate O2. Y186 is a binding site for Cu(2+). (1,4-beta-D-glucosyl)n-binding residues include D224, Y226, and E229. N-linked (GlcNAc...) asparagine glycosylation is present at N233.

It belongs to the polysaccharide monooxygenase AA9 family. Cu(2+) is required as a cofactor.

Its subcellular location is the secreted. It catalyses the reaction [(1-&gt;4)-beta-D-glucosyl]n+m + reduced acceptor + O2 = 4-dehydro-beta-D-glucosyl-[(1-&gt;4)-beta-D-glucosyl]n-1 + [(1-&gt;4)-beta-D-glucosyl]m + acceptor + H2O.. Functionally, lytic polysaccharide monooxygenase (LPMO) that depolymerizes crystalline and amorphous polysaccharides via the oxidation of scissile alpha- or beta-(1-4)-glycosidic bonds, yielding specifically C1 oxidation product. Catalysis by LPMOs requires the reduction of the active-site copper from Cu(II) to Cu(I) by a reducing agent and H(2)O(2) or O(2) as a cosubstrate. Displays catalytic activity on insoluble cellulose using I-beta microfibril model substrate. This Heterobasidion irregulare (strain TC 32-1) protein is AA9 family lytic polysaccharide monooxygenase B.